An 84-amino-acid chain; its full sequence is UPF0386 protein Oant_1614 (84 aa).

This sequence belongs to the UPF0386 family.

The chain is UPF0386 protein Oant_1614 from Brucella anthropi (strain ATCC 49188 / DSM 6882 / CCUG 24695 / JCM 21032 / LMG 3331 / NBRC 15819 / NCTC 12168 / Alc 37) (Ochrobactrum anthropi).